A 217-amino-acid chain; its full sequence is Thiamine-phosphate synthase (217 aa).

4-amino-2-methyl-5-(diphosphooxymethyl)pyrimidine-binding positions include 39–43 and Asn71; that span reads QYRDK. Asp72 and Asp91 together coordinate Mg(2+). 4-amino-2-methyl-5-(diphosphooxymethyl)pyrimidine is bound at residue Thr110. Residue 137–139 coordinates 2-[(2R,5Z)-2-carboxy-4-methylthiazol-5(2H)-ylidene]ethyl phosphate; sequence SNT. 4-amino-2-methyl-5-(diphosphooxymethyl)pyrimidine is bound at residue Lys140. Gly167 is a 2-[(2R,5Z)-2-carboxy-4-methylthiazol-5(2H)-ylidene]ethyl phosphate binding site.

This sequence belongs to the thiamine-phosphate synthase family. The cofactor is Mg(2+).

The catalysed reaction is 2-[(2R,5Z)-2-carboxy-4-methylthiazol-5(2H)-ylidene]ethyl phosphate + 4-amino-2-methyl-5-(diphosphooxymethyl)pyrimidine + 2 H(+) = thiamine phosphate + CO2 + diphosphate. The enzyme catalyses 2-(2-carboxy-4-methylthiazol-5-yl)ethyl phosphate + 4-amino-2-methyl-5-(diphosphooxymethyl)pyrimidine + 2 H(+) = thiamine phosphate + CO2 + diphosphate. It carries out the reaction 4-methyl-5-(2-phosphooxyethyl)-thiazole + 4-amino-2-methyl-5-(diphosphooxymethyl)pyrimidine + H(+) = thiamine phosphate + diphosphate. It participates in cofactor biosynthesis; thiamine diphosphate biosynthesis; thiamine phosphate from 4-amino-2-methyl-5-diphosphomethylpyrimidine and 4-methyl-5-(2-phosphoethyl)-thiazole: step 1/1. Condenses 4-methyl-5-(beta-hydroxyethyl)thiazole monophosphate (THZ-P) and 2-methyl-4-amino-5-hydroxymethyl pyrimidine pyrophosphate (HMP-PP) to form thiamine monophosphate (TMP). The sequence is that of Thiamine-phosphate synthase from Saccharophagus degradans (strain 2-40 / ATCC 43961 / DSM 17024).